Here is a 310-residue protein sequence, read N- to C-terminus: D-alanine--D-alanine ligase (310 aa).

The ATP-grasp domain maps to 104–305 (KRLFHSEGLP…MPQLAERILQ (202 aa)). ATP is bound at residue 135–190 (LGDFHGAAFVKPLDSGSSVGISRAVGKDELIRGVAKALSVSHRCMVERAIEGRELT). 3 residues coordinate Mg(2+): aspartate 259, glutamate 272, and asparagine 274.

This sequence belongs to the D-alanine--D-alanine ligase family. It depends on Mg(2+) as a cofactor. The cofactor is Mn(2+).

It localises to the cytoplasm. The catalysed reaction is 2 D-alanine + ATP = D-alanyl-D-alanine + ADP + phosphate + H(+). The protein operates within cell wall biogenesis; peptidoglycan biosynthesis. In terms of biological role, cell wall formation. The protein is D-alanine--D-alanine ligase of Magnetococcus marinus (strain ATCC BAA-1437 / JCM 17883 / MC-1).